A 292-amino-acid polypeptide reads, in one-letter code: 2-(5''-triphosphoribosyl)-3'-dephosphocoenzyme-A synthase (292 aa).

The protein belongs to the CitG/MdcB family.

It carries out the reaction 3'-dephospho-CoA + ATP = 2'-(5''-triphospho-alpha-D-ribosyl)-3'-dephospho-CoA + adenine. Catalyzes the formation of 2-(5''-triphosphoribosyl)-3'-dephosphocoenzyme-A, the precursor of the prosthetic group of the holo-acyl carrier protein (gamma chain) of citrate lyase, from ATP and dephospho-CoA. This Escherichia coli O17:K52:H18 (strain UMN026 / ExPEC) protein is 2-(5''-triphosphoribosyl)-3'-dephosphocoenzyme-A synthase.